An 82-amino-acid polypeptide reads, in one-letter code: Conotoxin Tx6.6 (82 aa).

Positions Met-1–Leu-19 are cleaved as a signal peptide. The propeptide occupies Val-20 to Lys-51. 3 disulfides stabilise this stretch: Cys-53/Cys-71, Cys-60/Cys-76, and Cys-70/Cys-81. The residue at position 82 (Ala-82) is an Alanine amide; partial.

Belongs to the O1 superfamily. Expressed by the venom duct.

Its subcellular location is the secreted. Its function is as follows. Omega-conotoxins act at presynaptic membranes, they bind and block voltage-gated calcium channels (Cav). The polypeptide is Conotoxin Tx6.6 (Conus textile (Cloth-of-gold cone)).